Here is a 400-residue protein sequence, read N- to C-terminus: ELAV-like protein 4 (400 aa).

Residues 12–48 (TMEPQVSNGPTSNTSNGPSSNSRNCPSPMQTGAATDD) are disordered. The segment covering 18-33 (SNGPTSNTSNGPSSNS) has biased composition (low complexity). The segment covering 34 to 44 (RNCPSPMQTGA) has biased composition (polar residues). 3 RRM domains span residues 51–158 (TNLI…YARP), 166–246 (ANLY…FANN), and 317–395 (WCIF…FKTN).

It belongs to the RRM elav family.

It localises to the cytoplasm. It is found in the perikaryon. The protein resides in the cell projection. The protein localises to the axon. Its subcellular location is the dendrite. It localises to the growth cone. In terms of biological role, RNA-binding protein that is involved in the post-transcriptional regulation of mRNAs. Plays a role in the regulation of mRNA stability, alternative splicing and translation. Binds to AU-rich element (ARE) sequences in the 3' untranslated region (3'UTR) of target mRNAs. Mainly plays a role in neuron-specific RNA processing. The protein is ELAV-like protein 4 (elavl4) of Xenopus tropicalis (Western clawed frog).